A 207-amino-acid polypeptide reads, in one-letter code: Claudin-11 (207 aa).

Residue Met-1 is a topological domain, cytoplasmic. The helical transmembrane segment at 2-22 (VATCLQVVGFVTSFVGWIGII) threads the bilayer. Residues 23–82 (VTTSTNDWVVTCGYTIPTCRKLDELGSKGLWADCVMATGLYHCKPLVDILILPGYVQACR) lie on the Extracellular side of the membrane. The helical transmembrane segment at 83–103 (ALMIAASVLGLPAILLLLTVL) threads the bilayer. At 104–122 (PCIRMGHEPGVAKYRRAQL) the chain is on the cytoplasmic side. A helical transmembrane segment spans residues 123-143 (AGVMLVLVALCAMVATIWFPV). Residues 144-157 (CAHRETTIVSFGYS) are Extracellular-facing. The helical transmembrane segment at 158–178 (LYAGWIGAVLCLVGGCVIVCC) threads the bilayer. Residues 179-207 (AGDAQAFGENRFYYSSGSSSPTHAKSAHV) are Cytoplasmic-facing. 4 positions are modified to phosphoserine: Ser-193, Ser-194, Ser-197, and Ser-198.

This sequence belongs to the claudin family. Interacts with tetraspanin-3/TSPAN3. Interacts with OCLN.

It localises to the cell junction. It is found in the tight junction. The protein localises to the cell membrane. Its function is as follows. Plays a major role in tight junction-specific obliteration of the intercellular space, through calcium-independent cell-adhesion activity. The polypeptide is Claudin-11 (CLDN11) (Bos taurus (Bovine)).